Reading from the N-terminus, the 333-residue chain is MIDTQLPLTDLHRHLDGNIRPETILDLAQQHNIALPAYELETLRPHVQITKNEPSLVSFLQKLDWGVAVLADLDACRRVAYENVVDVANAGIDYAELRFSPYYMAMKHQLPIEGVVEAIIDGVQSALHTYDVEIRLIGILSRTFGENACQQELNGLLKHQDKITALDLAGDELGFPGHLFQPHFNRARDTGWKITVHAGEAAGAESIWHAIKELGASRIGHGVKAIEDPRLMDYLAEHQIGIESCLTSNIQTSTIASLAQHPLKKFLEHGIIASLNTDDPAVEGIELKHEYTVAAPAAGLTAAQIRQAQINGLTMAFISQAERDALIKKVSLG.

Residues His-12 and His-14 each contribute to the Zn(2+) site. Residues His-14, Asp-16, and Gly-170 each coordinate substrate. Residue His-197 participates in Zn(2+) binding. The Proton donor role is filled by Glu-200. Residue Asp-278 participates in Zn(2+) binding. A substrate-binding site is contributed by Asp-279.

This sequence belongs to the metallo-dependent hydrolases superfamily. Adenosine and AMP deaminases family. Adenosine deaminase subfamily. Requires Zn(2+) as cofactor.

It carries out the reaction adenosine + H2O + H(+) = inosine + NH4(+). The catalysed reaction is 2'-deoxyadenosine + H2O + H(+) = 2'-deoxyinosine + NH4(+). Functionally, catalyzes the hydrolytic deamination of adenosine and 2-deoxyadenosine. In Proteus mirabilis (strain HI4320), this protein is Adenosine deaminase.